The sequence spans 114 residues: MNTFKVQFFSPDDQISFSGVVSLSVTGLEGELMILAHHAPYLIYLLPGMITVKMSNQTEKKVVIDSGVLEVANNNCSIITSQIQVFDRAIHDEKSFKNKRISIYLSYLDEKFLS.

It belongs to the ATPase epsilon chain family. In terms of assembly, F-type ATPases have 2 components, CF(1) - the catalytic core - and CF(0) - the membrane proton channel. CF(1) has five subunits: alpha(3), beta(3), gamma(1), delta(1), epsilon(1). CF(0) has three main subunits: a, b and c.

It localises to the cell membrane. Its function is as follows. Produces ATP from ADP in the presence of a proton gradient across the membrane. This chain is ATP synthase epsilon chain, found in Wolbachia pipientis wMel.